The sequence spans 588 residues: Interferon-activable protein 208 (588 aa).

The 88-residue stretch at 5–92 (MVNYYKQIVL…VDILRKEMEK (88 aa)) folds into the Pyrin domain. Disordered stretches follow at residues 157 to 183 (ATST…SLQT) and 469 to 526 (EMQN…RRVN). 2 stretches are compositionally biased toward polar residues: residues 172-183 (RFPTTASSSLQT) and 470-487 (MQNP…QPRL).

The protein belongs to the HIN-200 family.

This is Interferon-activable protein 208 from Mus musculus (Mouse).